Here is a 135-residue protein sequence, read N- to C-terminus: Ribosome-binding factor A (135 aa).

Belongs to the RbfA family. As to quaternary structure, monomer. Binds 30S ribosomal subunits, but not 50S ribosomal subunits or 70S ribosomes.

It is found in the cytoplasm. Functionally, one of several proteins that assist in the late maturation steps of the functional core of the 30S ribosomal subunit. Associates with free 30S ribosomal subunits (but not with 30S subunits that are part of 70S ribosomes or polysomes). Required for efficient processing of 16S rRNA. May interact with the 5'-terminal helix region of 16S rRNA. In Aliivibrio fischeri (strain MJ11) (Vibrio fischeri), this protein is Ribosome-binding factor A.